We begin with the raw amino-acid sequence, 471 residues long: Siroheme synthase (471 aa).

Residues 1–203 (MDYLPLFADI…GDWESAEKTL (203 aa)) are precorrin-2 dehydrogenase /sirohydrochlorin ferrochelatase. NAD(+) contacts are provided by residues 22–23 (EV) and 43–44 (KN). Position 128 is a phosphoserine (S128). The tract at residues 215–471 (GEIILVGAGP…DTKSSLINLA (257 aa)) is uroporphyrinogen-III C-methyltransferase. P224 lines the S-adenosyl-L-methionine pocket. The active-site Proton acceptor is D247. K269 serves as the catalytic Proton donor. S-adenosyl-L-methionine is bound by residues 300–302 (GGD), I305, 330–331 (TA), M382, and A411.

In the N-terminal section; belongs to the precorrin-2 dehydrogenase / sirohydrochlorin ferrochelatase family. The protein in the C-terminal section; belongs to the precorrin methyltransferase family.

The enzyme catalyses uroporphyrinogen III + 2 S-adenosyl-L-methionine = precorrin-2 + 2 S-adenosyl-L-homocysteine + H(+). It carries out the reaction precorrin-2 + NAD(+) = sirohydrochlorin + NADH + 2 H(+). It catalyses the reaction siroheme + 2 H(+) = sirohydrochlorin + Fe(2+). It participates in cofactor biosynthesis; adenosylcobalamin biosynthesis; precorrin-2 from uroporphyrinogen III: step 1/1. The protein operates within cofactor biosynthesis; adenosylcobalamin biosynthesis; sirohydrochlorin from precorrin-2: step 1/1. Its pathway is porphyrin-containing compound metabolism; siroheme biosynthesis; precorrin-2 from uroporphyrinogen III: step 1/1. It functions in the pathway porphyrin-containing compound metabolism; siroheme biosynthesis; siroheme from sirohydrochlorin: step 1/1. It participates in porphyrin-containing compound metabolism; siroheme biosynthesis; sirohydrochlorin from precorrin-2: step 1/1. Its function is as follows. Multifunctional enzyme that catalyzes the SAM-dependent methylations of uroporphyrinogen III at position C-2 and C-7 to form precorrin-2 via precorrin-1. Then it catalyzes the NAD-dependent ring dehydrogenation of precorrin-2 to yield sirohydrochlorin. Finally, it catalyzes the ferrochelation of sirohydrochlorin to yield siroheme. The protein is Siroheme synthase of Zymomonas mobilis subsp. mobilis (strain ATCC 31821 / ZM4 / CP4).